The primary structure comprises 599 residues: Genetic interactor of prohibitins 3, mitochondrial (599 aa).

A mitochondrion-targeting transit peptide spans 1-46; sequence MLSLRRSIWIAACKRVSSFRTTIPIKSLHTNSQPVLSLRNVKFRPY. In terms of domain architecture, CP-type G spans 158–368; that stretch reads IESLDAIMTS…MHDVPGFGEN (211 aa). Residues 312-342 form a disordered region; it reads NSGASTPSDIRALRRKNEQEKNRTGPGASYM. Over residues 322 to 334 the composition is skewed to basic and acidic residues; that stretch reads RALRRKNEQEKNR.

It belongs to the TRAFAC class YlqF/YawG GTPase family. GEP3 subfamily.

The protein resides in the mitochondrion. Its function is as follows. May be involved in the mitochondrial lipid metabolism. The polypeptide is Genetic interactor of prohibitins 3, mitochondrial (GEP3) (Meyerozyma guilliermondii (strain ATCC 6260 / CBS 566 / DSM 6381 / JCM 1539 / NBRC 10279 / NRRL Y-324) (Yeast)).